The chain runs to 452 residues: Phosphoglucosamine mutase (452 aa).

S105 acts as the Phosphoserine intermediate in catalysis. Residues S105, D244, D246, and D248 each contribute to the Mg(2+) site. Residue S105 is modified to Phosphoserine.

Belongs to the phosphohexose mutase family. It depends on Mg(2+) as a cofactor. Activated by phosphorylation.

It carries out the reaction alpha-D-glucosamine 1-phosphate = D-glucosamine 6-phosphate. Its function is as follows. Catalyzes the conversion of glucosamine-6-phosphate to glucosamine-1-phosphate. This is Phosphoglucosamine mutase from Blochmanniella floridana.